Reading from the N-terminus, the 543-residue chain is Serendipity locus protein alpha (543 aa).

The protein localises to the cytoplasm. The protein resides in the cell membrane. In terms of biological role, required for the cellularization of the syncytial blastoderm embryo. Involved in the localization of the actin filaments just prior to and during plasma membrane invagination. Sry-alpha together with nullo and bnk may provide auxiliary functions, by acting both to stabilize a large and dynamic microfilament structure and regulate its functions. The polypeptide is Serendipity locus protein alpha (Sry-alpha) (Drosophila subobscura (Fruit fly)).